Reading from the N-terminus, the 307-residue chain is 2-methoxy-6-polyprenyl-1,4-benzoquinol methylase, mitochondrial (307 aa).

The transit peptide at 1–19 (MLISSRIVRSSLVNVPLRL) directs the protein to the mitochondrion. Residues Ser122, Asp148, 179–180 (NG), and Ser197 contribute to the S-adenosyl-L-methionine site.

The protein belongs to the class I-like SAM-binding methyltransferase superfamily. MenG/UbiE family. As to quaternary structure, component of a multi-subunit COQ enzyme complex, composed of at least COQ3, COQ4, COQ5, COQ6, COQ7 and COQ9. Interacts with COQ3.

Its subcellular location is the mitochondrion inner membrane. The catalysed reaction is 2-methoxy-6-(all-trans-hexaprenyl)benzene-1,4-diol + S-adenosyl-L-methionine = 5-methoxy-2-methyl-3-(all-trans-hexaprenyl)benzene-1,4-diol + S-adenosyl-L-homocysteine + H(+). It participates in cofactor biosynthesis; ubiquinone biosynthesis. Methyltransferase required for the conversion of 2-hexaprenyl-6-methoxy-1,4-benzoquinol (DDMQH2) to 2-hexaprenyl-3-methyl-6-methoxy-1,4-benzoquinol (DMQH2). In Saccharomyces cerevisiae (strain ATCC 204508 / S288c) (Baker's yeast), this protein is 2-methoxy-6-polyprenyl-1,4-benzoquinol methylase, mitochondrial.